Reading from the N-terminus, the 192-residue chain is Immunity protein YqcF (192 aa).

In terms of assembly, probably interacts with cognate toxin YqcG but not with other non-cognate toxins. The interaction inhibits the toxic activity of YqcG.

The protein resides in the cytoplasm. Immunity component of one of 6 LXG toxin-immunity modules in this strain. They promote kin selection, mediate competition in biofilms, and drive spatial segregation of different strains, indicating that LXG toxins may help avoid warfare between strains in biofilms. Mediates intercellular competition during biofilm formation; disruption of the operon disadvantages the bacteria, but overexpression of the cognate immunity protein restores growth in competition with wild-type. In situ neutralizes the toxic effect of cognate toxin YqcG. Neutralizes the toxic activity of cognate toxin YqcG upon expression in E.coli. Does not have immunity protein activity on other LXG toxins. In Bacillus subtilis (strain 168), this protein is Immunity protein YqcF (yqcF).